Reading from the N-terminus, the 303-residue chain is MDALELKNIISDGLLSFPVTDFDQNGDFNKSSYAKRLEWLAPYGASALFAAGGTGEFFSLTGNEYSEVIKTAVDTCRGSVPIIAGAGGPTRQAIEQAKEAERLGAHGILLMPHYLTEASQEGLIEHVKQVCNSVDFGVIFYNRSVSRLNLDSIQKLTEMCPNLIGFKDSSGQIDMMTAVTQTMGDRLSYLGGLPTAEVFAAPYKALGCPVYSSAVFNFIPKTAMEFYNALRSDDFETTNRLIKDFFLPLIKIRDRKSGYAVSMIKAGAKIVGHDAGPVRPPLSDLTQADYEDLAALIATLGPQ.

It belongs to the DapA family.

It carries out the reaction 5-dehydro-4-deoxy-D-glucarate + H(+) = 2,5-dioxopentanoate + CO2 + H2O. It functions in the pathway carbohydrate acid metabolism; D-glucarate degradation; 2,5-dioxopentanoate from D-glucarate: step 2/2. This Acinetobacter baumannii (strain AB307-0294) protein is Probable 5-dehydro-4-deoxyglucarate dehydratase.